A 115-amino-acid polypeptide reads, in one-letter code: MDKSKRPFLKSKRSFRRRLPPIQSGDRIDYRNMSLISRFISEQGKILSRRVNRLTLKQQRLITLAIKQARILSLLPFKRKGFQISESTARTNALKARTQNKDQKKEKFQINKKKK.

Residues T91 to K115 form a disordered region. The span at Q99–Q109 shows a compositional bias: basic and acidic residues.

This sequence belongs to the bacterial ribosomal protein bS18 family. As to quaternary structure, part of the 30S ribosomal subunit.

It localises to the plastid. The protein resides in the chloroplast. In Ipomoea purpurea (Common morning glory), this protein is Small ribosomal subunit protein bS18c.